Consider the following 285-residue polypeptide: Polyamine aminopropyltransferase (285 aa).

The 236-residue stretch at 2–237 (QMWFSQYHTV…GYWLFGFASK (236 aa)) folds into the PABS domain. Gln31 contributes to the S-methyl-5'-thioadenosine binding site. Residue Asp86 participates in spermidine binding. Residues Glu106 and 137 to 138 (DG) contribute to the S-methyl-5'-thioadenosine site. The active-site Proton acceptor is the Asp155. 155–158 (DSTD) lines the spermidine pocket.

This sequence belongs to the spermidine/spermine synthase family. As to quaternary structure, homodimer or homotetramer.

The protein localises to the cytoplasm. The catalysed reaction is S-adenosyl 3-(methylsulfanyl)propylamine + putrescine = S-methyl-5'-thioadenosine + spermidine + H(+). It functions in the pathway amine and polyamine biosynthesis; spermidine biosynthesis; spermidine from putrescine: step 1/1. Its function is as follows. Catalyzes the irreversible transfer of a propylamine group from the amino donor S-adenosylmethioninamine (decarboxy-AdoMet) to putrescine (1,4-diaminobutane) to yield spermidine. This is Polyamine aminopropyltransferase from Agathobacter rectalis (strain ATCC 33656 / DSM 3377 / JCM 17463 / KCTC 5835 / VPI 0990) (Eubacterium rectale).